The following is a 490-amino-acid chain: Bifunctional dihydrocamalexate synthase/camalexin synthase (490 aa).

Residues 1 to 21 (MSVFLCFLVLLPLILIFLNVL) traverse the membrane as a helical segment.

The protein belongs to the cytochrome P450 family.

The protein resides in the membrane. The catalysed reaction is 2-(L-cystein-S-yl)-2-(1H-indol-3-yl)-acetonitrile + 2 reduced [NADPH--hemoprotein reductase] + 2 O2 = camalexin + hydrogen cyanide + 2 oxidized [NADPH--hemoprotein reductase] + CO2 + 4 H2O + 2 H(+). It carries out the reaction 2-(L-cystein-S-yl)-2-(1H-indol-3-yl)-acetonitrile + reduced [NADPH--hemoprotein reductase] + O2 = (R)-dihydrocamalexate + hydrogen cyanide + oxidized [NADPH--hemoprotein reductase] + 2 H2O + 2 H(+). It catalyses the reaction (R)-dihydrocamalexate + reduced [NADPH--hemoprotein reductase] + O2 = camalexin + oxidized [NADPH--hemoprotein reductase] + CO2 + 2 H2O. Its function is as follows. Multifunctional enzyme involved in the biosynthesis of the indole-derived phytoalexin camalexin. Catalyzes two reactions, the formation of dihydrocamalexate from indole-3-acetonitrile-cysteine conjugate and the oxidative decarboxylation of dihydrocamalexate which is the final step in camalexin biosynthesis. Required for the resistance to the fungal pathogens A.brassicicola, B.cinerea, B.elliptica, B.tulipae, L.maculans and Colletotrichum higginsianum. Seems not to be required for resistance to P.syringae, P.porri, and not involved in age-related resistance. The sequence is that of Bifunctional dihydrocamalexate synthase/camalexin synthase (CYP71B15) from Arabidopsis thaliana (Mouse-ear cress).